A 1188-amino-acid polypeptide reads, in one-letter code: Adenomatous polyposis coli protein-related protein 1 (1188 aa).

Residues 1-50 (MSSSSSDENETTIHRTGSNTGGSGIYSQPRAGSSKRTSNVRHDVSDVDDE) are disordered. Positions 1–486 (MSSSSSDENE…LSLRATRASP (486 aa)) are required for interaction with bar-1 and hmp-2. The ARM repeat unit spans residues 314 to 358 (NCLKVLASLLSPDARFTSLVDSATGILKYVSQYLANTSTHLELRS). Over residues 579–588 (IQQQQQMQKA) the composition is skewed to low complexity. Disordered regions lie at residues 579 to 624 (IQQQ…SMNP), 670 to 702 (TESE…DGAT), 726 to 751 (TPNG…GPSL), 778 to 952 (QSEM…TMRF), 1003 to 1092 (CSMI…LKDK), and 1157 to 1181 (YQKP…PNPK). The segment at 600-1188 (DLDIPTSTVM…NPKQMLVTIV (589 aa)) is required for interaction with pry-1. Composition is skewed to polar residues over residues 604–624 (PTST…SMNP) and 677–701 (LTSQ…SDGA). Composition is skewed to polar residues over residues 778 to 788 (QSEMPTSSSTP) and 800 to 811 (FSPTQKTTSSPA). Basic and acidic residues-rich tracts occupy residues 832–843 (RRQDASDADRLL) and 871–900 (EPER…DHNG). Polar residues-rich tracts occupy residues 909-929 (WSPQ…SSED), 937-946 (EPNSSTSGAA), 1014-1039 (QRNE…SASS), and 1164-1180 (GRNN…TPNP).

Belongs to the adenomatous polyposis coli (APC) family. Interacts (via N-terminus) with bar-1 and hmp-2; the interaction with hmp-2 is relatively weak. Interacts (via C-terminus) with pry-1 (via N-terminus). Probably associates with bar-1, gsk-3, pry-1 in a complex. During the L1 stage, expressed in vulval precursor cells (P3-8.p), seam cells and excretory cells.

It is found in the cell junction. It localises to the adherens junction. Its subcellular location is the cytoplasm. The protein resides in the nucleus. Functionally, has a role in endoderm cell specification and pharyngeal development. Required for the migration of epithelial cells, organization of the anterior seam cells and ceh-13 expression during embryo morphogenesis. Prevents hyperactivation of the Wnt signaling pathway during endoderm development, probably by preventing hmp-2 nuclear translocation. During larval development, apr-1 is required for expression of lin-39 in P3-8.p. Shown to negatively regulate Wnt signaling in vulval precursor cells. Has a role in cell division by establishing the polarity of the mother cell which forms the asymmetries of the daughter nuclei. During the L4 larval stage, it is required for the asymmetric division and self-renewal of seam cells. Thought to regulate export of wrm-1 from the nucleus possibly as part of a complex involving pry-1. The protein is Adenomatous polyposis coli protein-related protein 1 of Caenorhabditis elegans.